We begin with the raw amino-acid sequence, 211 residues long: MPVKIIDHVYAQYLLTQLRNRNTKGIDFRKGLVRLGRIVGYELVRYFPTREVEVETPLGKAVGIEILGLDKVIIVQILRAAMPFVEGLLKAFPQARLGVIAARRKEEGGVVDVEVFYSKIPTVEREDIVIVADPMLATGITMTRAIEEVYRVGQPGRLIVVSVIATPVGIERVLSKYPETEIFVVAIDPTLNDKAFIVPGLGDAGDRAFST.

Residue 30–34 (KGLVR) participates in GTP binding. 5-phospho-alpha-D-ribose 1-diphosphate-binding positions include Arg79, Arg104, and 133 to 141 (DPMLATGIT). Residues Ile197 and 202–204 (GDA) each bind uracil. Asp203 is a 5-phospho-alpha-D-ribose 1-diphosphate binding site.

The protein belongs to the UPRTase family. The cofactor is Mg(2+).

It carries out the reaction UMP + diphosphate = 5-phospho-alpha-D-ribose 1-diphosphate + uracil. It participates in pyrimidine metabolism; UMP biosynthesis via salvage pathway; UMP from uracil: step 1/1. Allosterically activated by GTP. Functionally, catalyzes the conversion of uracil and 5-phospho-alpha-D-ribose 1-diphosphate (PRPP) to UMP and diphosphate. The chain is Uracil phosphoribosyltransferase from Pyrobaculum islandicum (strain DSM 4184 / JCM 9189 / GEO3).